Here is a 167-residue protein sequence, read N- to C-terminus: NAD(P)H-quinone oxidoreductase subunit I, chloroplastic (167 aa).

4Fe-4S ferredoxin-type domains follow at residues 55–84 and 95–124; these read GRIH…VDWK and LNYS…MTEE. The [4Fe-4S] cluster site is built by cysteine 64, cysteine 67, cysteine 70, cysteine 74, cysteine 104, cysteine 107, cysteine 110, and cysteine 114.

Belongs to the complex I 23 kDa subunit family. In terms of assembly, NDH is composed of at least 16 different subunits, 5 of which are encoded in the nucleus. The cofactor is [4Fe-4S] cluster.

The protein resides in the plastid. It is found in the chloroplast thylakoid membrane. It carries out the reaction a plastoquinone + NADH + (n+1) H(+)(in) = a plastoquinol + NAD(+) + n H(+)(out). The catalysed reaction is a plastoquinone + NADPH + (n+1) H(+)(in) = a plastoquinol + NADP(+) + n H(+)(out). NDH shuttles electrons from NAD(P)H:plastoquinone, via FMN and iron-sulfur (Fe-S) centers, to quinones in the photosynthetic chain and possibly in a chloroplast respiratory chain. The immediate electron acceptor for the enzyme in this species is believed to be plastoquinone. Couples the redox reaction to proton translocation, and thus conserves the redox energy in a proton gradient. This is NAD(P)H-quinone oxidoreductase subunit I, chloroplastic from Arabis hirsuta (Hairy rock-cress).